We begin with the raw amino-acid sequence, 120 residues long: Large ribosomal subunit protein bL20 (120 aa).

It belongs to the bacterial ribosomal protein bL20 family.

Its function is as follows. Binds directly to 23S ribosomal RNA and is necessary for the in vitro assembly process of the 50S ribosomal subunit. It is not involved in the protein synthesizing functions of that subunit. The protein is Large ribosomal subunit protein bL20 of Paracidovorax citrulli (strain AAC00-1) (Acidovorax citrulli).